Reading from the N-terminus, the 436-residue chain is GTPase Der (436 aa).

EngA-type G domains follow at residues 4–167 (PTVA…PNEI) and 175–351 (IKFS…HAQN). GTP-binding positions include 10–17 (GRPNVGKS), 57–61 (DTGGI), 119–122 (NKVD), 181–188 (GRPNVGKS), 229–233 (DTAGM), and 294–297 (NKWD). Residues 352–436 (LRISSSVLND…PVHLIARKRK (85 aa)) form the KH-like domain.

This sequence belongs to the TRAFAC class TrmE-Era-EngA-EngB-Septin-like GTPase superfamily. EngA (Der) GTPase family. As to quaternary structure, associates with the 50S ribosomal subunit.

GTPase that plays an essential role in the late steps of ribosome biogenesis. This is GTPase Der from Lactococcus lactis subsp. lactis (strain IL1403) (Streptococcus lactis).